Here is a 94-residue protein sequence, read N- to C-terminus: Fungal defensin scedosporisin-2 (94 aa).

An N-terminal signal peptide occupies residues 1-25; that stretch reads MKFSNISIAALFTILASTAMAAPAA. A propeptide spanning residues 26-56 is cleaved from the precursor; sequence DSPDSIVAREPAPVEETYEAPSGLEKRGFGC. Beta-D-GlcNAc-(1-&gt;4)-Mur2Ac(oyl-L-Ala-gamma-D-Glu-L-Lys-D-Ala-D-Ala)-di-trans,octa-cis-undecaprenyl diphosphate contacts are provided by F54, G55, and C56. Disulfide bonds link C56–C78, C63–C91, and C67–C93. The interval 57-60 is interaction site with membrane interface; the sequence is PGSE. Position 66 (H66) interacts with beta-D-GlcNAc-(1-&gt;4)-Mur2Ac(oyl-L-Ala-gamma-D-Glu-L-Lys-D-Ala-D-Ala)-di-trans,octa-cis-undecaprenyl diphosphate. An interaction site with membrane interface region spans residues 83–90; the sequence is IPFVGRPR. C91 provides a ligand contact to beta-D-GlcNAc-(1-&gt;4)-Mur2Ac(oyl-L-Ala-gamma-D-Glu-L-Lys-D-Ala-D-Ala)-di-trans,octa-cis-undecaprenyl diphosphate.

It belongs to the invertebrate defensin family.

It localises to the secreted. It is found in the target cell membrane. Antibacterial peptide potently active against Gram-positive bacteria. May act by selectively inhibiting peptidoglycan biosynthesis through complex formation with the cell wall precursor lipid II (1:1 molar ratio) thus inhibiting cell wall synthesis. Shows remarkably activity against resistant isolates such as methicillin-resistant Staphylococcus aureus (MRSA) and vancomycin-resistant Enterococci (VRE) at the concentration of micromolar level. Does not act by destroying the membrane integrity, which is consistent with its nonamphiphilic architecture. Acts more rapidly than vancomycin. Shows low hemolysis and cytotoxicity and high serum stability. In vivo, is as efficient as vancomycin to protect mouse peritonitis models from MRSA infections. The sequence is that of Fungal defensin scedosporisin-2 from Pseudallescheria apiosperma (Scedosporium apiospermum).